We begin with the raw amino-acid sequence, 82 residues long: Small ribosomal subunit protein bS18 (82 aa).

The segment at 1-20 (MVDINQIPTRRPFHRRRKTC) is disordered.

The protein belongs to the bacterial ribosomal protein bS18 family. In terms of assembly, part of the 30S ribosomal subunit. Forms a tight heterodimer with protein bS6.

Binds as a heterodimer with protein bS6 to the central domain of the 16S rRNA, where it helps stabilize the platform of the 30S subunit. In Brucella anthropi (strain ATCC 49188 / DSM 6882 / CCUG 24695 / JCM 21032 / LMG 3331 / NBRC 15819 / NCTC 12168 / Alc 37) (Ochrobactrum anthropi), this protein is Small ribosomal subunit protein bS18.